Reading from the N-terminus, the 318-residue chain is MDQDAFILKEDSEVEREAPGGRESLSDVIGFLDAVLSSEPTDIGGDRSWLHNTINTPQGPGSAHRAKSEGEGEVSTPSTQDNRSGEESRVSGRTSKPEAEAHAGNLDKQNIHRAFGGRTGTNSVSQDLGDGGDSGILENPPNERGYPRSGIEDENREMAAHPDKRGEDQAEGLPEEVRGGTSLPDEGEGGASNNGRSMEPGSSHSARVTGVLVIPSPELEEAVLRRNKRRPTNSGSKPLTPATVPGTRSPPLNRYNSTGSPPGKPPSTQDEHINSGDTPAVRVKDRKPPIGTRSVSDCPANGRPIHPGLETDSTKKGA.

2 disordered regions span residues 1 to 23 (MDQD…GGRE) and 38 to 318 (SEPT…KKGA). Basic and acidic residues predominate over residues 7 to 20 (ILKEDSEVEREAPG). The segment covering 50-59 (LHNTINTPQG) has biased composition (polar residues). Position 68 is a phosphoserine; by host (Ser68). A compositionally biased stretch (basic and acidic residues) spans 83–101 (RSGEESRVSGRTSKPEAEA). Phosphoserine; by host is present on Ser125. The span at 150–168 (GIEDENREMAAHPDKRGED) shows a compositional bias: basic and acidic residues. A compositionally biased stretch (polar residues) spans 191–206 (ASNNGRSMEPGSSHSA). 4 positions are modified to phosphoserine; by host: Ser192, Ser249, Ser257, and Ser260.

The sequence is that of Protein W (P/V/C) from Sendai virus (strain Fushimi) (SeV).